The sequence spans 325 residues: Mitochondrial citrate transporter C (325 aa).

Solcar repeat units lie at residues 15 to 105 (ASPA…YKQM), 117 to 208 (KATF…LKAF), and 221 to 310 (LPSY…LKGK). 6 helical membrane-spanning segments follow: residues 21–41 (LIAGGGAGMMEALVCHPLDTI), 82–102 (GAVLGGIIPKMAIRFTSYESY), 121–141 (LAGLAAGVTEAVAVVNPMEVV), 187–207 (TALRQGTNQAANFTAYTELKA), 221–241 (LPSYQTTFIGLISGAVGPFSN), and 282–303 (FYKGITPRVMRVAPGQAVTFTV).

The protein belongs to the mitochondrial carrier (TC 2.A.29) family.

It localises to the mitochondrion inner membrane. Mitochondrial transporter that does not mediate citrate export from mitochondria to cytoplasm. Its exact function has still to be determined. The sequence is that of Mitochondrial citrate transporter C from Aspergillus niger (strain ATCC 1015 / CBS 113.46 / FGSC A1144 / LSHB Ac4 / NCTC 3858a / NRRL 328 / USDA 3528.7).